The chain runs to 82 residues: Sulfur carrier protein TusA (82 aa).

The Cysteine persulfide intermediate role is filled by Cys-20.

The protein belongs to the sulfur carrier protein TusA family.

It localises to the cytoplasm. In terms of biological role, sulfur carrier protein which probably makes part of a sulfur-relay system. In Aeromonas hydrophila subsp. hydrophila (strain ATCC 7966 / DSM 30187 / BCRC 13018 / CCUG 14551 / JCM 1027 / KCTC 2358 / NCIMB 9240 / NCTC 8049), this protein is Sulfur carrier protein TusA.